We begin with the raw amino-acid sequence, 40 residues long: Sauvagin (40 aa).

Glutamine 1 carries the pyrrolidone carboxylic acid modification. Isoleucine 40 carries the isoleucine amide modification.

It belongs to the sauvagine/corticotropin-releasing factor/urotensin I family.

The protein resides in the secreted. Its function is as follows. Hypotensive and diuretic peptide. In Phyllomedusa sauvagei (Sauvage's leaf frog), this protein is Sauvagin.